The following is a 647-amino-acid chain: Calmodulin-binding protein 60 B (647 aa).

Positions 1-10 (MMDSGNNNMN) are enriched in polar residues. Positions 1–26 (MMDSGNNNMNRAKRNLDGNDDDQPER) are disordered. Residues 8–85 (NMNRAKRNLD…TGSSGSSPKR (78 aa)) form a calmodulin-binding region. The short motif at 12 to 19 (AKRNLDGN) is the Nuclear localization signal element. The tract at residues 155–278 (EDDEDWTQEE…AFHKKLTAEG (124 aa)) is DNA-binding.

It belongs to the plant ACBP60 protein family. As to quaternary structure, interacts with calmodulin (CaM). In terms of tissue distribution, expressed in leaves, stems, flowers, developing seeds and root.

It is found in the nucleus. In terms of biological role, transcription activator that binds DNA in a sequence-specific manner, likely 5'-GAAATTTTGG-3', to promote the expression of target genes. The polypeptide is Calmodulin-binding protein 60 B (Arabidopsis thaliana (Mouse-ear cress)).